The primary structure comprises 309 residues: Olfactory receptor 14A16 (309 aa).

Residues 1 to 23 are Extracellular-facing; sequence MANLTIVTEFILMGFSTNKNMCI. Asparagine 3 carries an N-linked (GlcNAc...) asparagine glycan. A helical transmembrane segment spans residues 24–44; it reads LHSILFLLIYLCALMGNVLII. Residues 45–52 are Cytoplasmic-facing; that stretch reads MITTLDHH. The helical transmembrane segment at 53 to 73 threads the bilayer; it reads LHTPVYFFLKNLSFLDLCLIS. Residues 74–97 are Extracellular-facing; it reads VTAPKSIANSLIHNNSISFLGCVS. An N-linked (GlcNAc...) asparagine glycan is attached at asparagine 87. A disulfide bridge links cysteine 95 with cysteine 187. The chain crosses the membrane as a helical span at residues 98-118; sequence QVFLLLSSASAELLLLTVMSF. Residues 119-131 are Cytoplasmic-facing; it reads DRYTAICHPLHYD. Residues 132–152 form a helical membrane-spanning segment; the sequence is VIMDRSTCVQRATVSWLYGGL. The Extracellular segment spans residues 153-194; the sequence is IAVMHTAGTFSLSYCGSNMVHQFFCDIPQLLAISCSENLIRE. Residues 195-215 traverse the membrane as a helical segment; it reads IALILINVVLDFCCFIVIIIT. At 216–235 the chain is on the cytoplasmic side; the sequence is YVHVFSTVKKIPSTEGQSKA. Residues 236–255 form a helical membrane-spanning segment; it reads YSICLPHLLVVLFLSTGFIA. At 256–268 the chain is on the extracellular side; that stretch reads YLKPASESPSILD. Residues 269–289 form a helical membrane-spanning segment; sequence AVISVFYTMLPPTFNPIIYSL. At 290–309 the chain is on the cytoplasmic side; it reads RNKAIKVALGMLIKGKLTKK.

This sequence belongs to the G-protein coupled receptor 1 family.

The protein resides in the cell membrane. Functionally, odorant receptor. The polypeptide is Olfactory receptor 14A16 (OR14A16) (Homo sapiens (Human)).